Consider the following 237-residue polypeptide: Protein GrpE (237 aa).

2 disordered regions span residues 1–52 and 200–237; these read MSGD…RLQQ and KVSM…QPGV. The span at 27–40 shows a compositional bias: polar residues; that stretch reads ASINSDEGQSSAQS. A compositionally biased stretch (low complexity) spans 204–218; that stretch reads GPGPQSGASPSSAQP.

It belongs to the GrpE family. Homodimer.

It is found in the cytoplasm. Functionally, participates actively in the response to hyperosmotic and heat shock by preventing the aggregation of stress-denatured proteins, in association with DnaK and GrpE. It is the nucleotide exchange factor for DnaK and may function as a thermosensor. Unfolded proteins bind initially to DnaJ; upon interaction with the DnaJ-bound protein, DnaK hydrolyzes its bound ATP, resulting in the formation of a stable complex. GrpE releases ADP from DnaK; ATP binding to DnaK triggers the release of the substrate protein, thus completing the reaction cycle. Several rounds of ATP-dependent interactions between DnaJ, DnaK and GrpE are required for fully efficient folding. The chain is Protein GrpE from Prochlorococcus marinus (strain MIT 9313).